A 101-amino-acid polypeptide reads, in one-letter code: Interleukin-8 (101 aa).

A signal peptide spans 1–22; it reads MTSKLAVALLAAFLLSAALCEG. Citrulline is present on Arg27. Cystine bridges form between Cys34–Cys61 and Cys36–Cys77.

The protein belongs to the intercrine alpha (chemokine CxC) family. Homodimer. Interacts with TNFAIP6 (via Link domain); this interaction interferes with chemokine binding to glycosaminoglycans. Citrullination at Arg-27 prevents proteolysis, and dampens tissue inflammation, it also enhances leukocytosis, possibly through impaired chemokine clearance from the blood circulation.

Its subcellular location is the secreted. Chemotactic factor that mediates inflammatory response by attracting neutrophils, basophils, and T-cells to clear pathogens and protect the host from infection. Also plays an important role in neutrophil activation. Released in response to an inflammatory stimulus, exerts its effect by binding to the G-protein-coupled receptors CXCR1 and CXCR2, primarily found in neutrophils, monocytes and endothelial cells. G-protein heterotrimer (alpha, beta, gamma subunits) constitutively binds to CXCR1/CXCR2 receptor and activation by IL8 leads to beta and gamma subunits release from Galpha (GNAI2 in neutrophils) and activation of several downstream signaling pathways including PI3K and MAPK pathways. The protein is Interleukin-8 (CXCL8) of Cercocebus atys (Sooty mangabey).